The chain runs to 100 residues: Integration host factor subunit alpha (100 aa).

Belongs to the bacterial histone-like protein family. Heterodimer of an alpha and a beta chain.

This protein is one of the two subunits of integration host factor, a specific DNA-binding protein that functions in genetic recombination as well as in transcriptional and translational control. Involved in hydrogenase gene expression. This Rhodobacter capsulatus (Rhodopseudomonas capsulata) protein is Integration host factor subunit alpha (ihfA).